We begin with the raw amino-acid sequence, 199 residues long: Prolactin-1 (199 aa).

Intrachain disulfides connect cysteine 4-cysteine 11, cysteine 58-cysteine 174, and cysteine 191-cysteine 199. Residue asparagine 60 is glycosylated (N-linked (GlcNAc...) asparagine).

It belongs to the somatotropin/prolactin family. Post-translationally, glycosylated.

It localises to the secreted. This is Prolactin-1 from Alligator mississippiensis (American alligator).